A 1291-amino-acid polypeptide reads, in one-letter code: Cytoplasmic FMR1-interacting protein (1291 aa).

Positions 1270 to 1291 are disordered; it reads PSVISSSSHYQDPQKLRQSINN. Residues 1271-1291 are compositionally biased toward polar residues; the sequence is SVISSSSHYQDPQKLRQSINN.

This sequence belongs to the CYFIP family. Interacts with Fmr1 and Rac1. Component of the WAVE complex composed of Hem/Kette, Scar/Wave and Cyfip where it binds through its C-terminus directly to Hem. As to expression, in the embryo, expressed mainly in the gut and in the developing central nervous system where high levels of expression are found in the CNS neuropile. Expression in the gut diminishes as development proceeds (at protein level). In the adult, expressed specifically in the nervous system.

Its subcellular location is the cytoplasm. Plays a role in guidance and morphology of central and peripheral axons and in synaptic morphology. Also required for formation of cell membrane protrusions and for bristle development. Plays a role in regulating mitochondrial activity, energy metabolism and membrane potential which maintains normal gamma-aminobutyric acid (GABA) signaling and ensures normal social behavior. In Drosophila melanogaster (Fruit fly), this protein is Cytoplasmic FMR1-interacting protein.